The primary structure comprises 329 residues: DNA-directed RNA polymerase subunit alpha (329 aa).

Residues 1-235 (MQGSVTEFLK…EQLEAFVDLR (235 aa)) are alpha N-terminal domain (alpha-NTD). The segment at 249–329 (FDPILLRPVD…NWPPASIADE (81 aa)) is alpha C-terminal domain (alpha-CTD).

It belongs to the RNA polymerase alpha chain family. As to quaternary structure, homodimer. The RNAP catalytic core consists of 2 alpha, 1 beta, 1 beta' and 1 omega subunit. When a sigma factor is associated with the core the holoenzyme is formed, which can initiate transcription.

It catalyses the reaction RNA(n) + a ribonucleoside 5'-triphosphate = RNA(n+1) + diphosphate. DNA-dependent RNA polymerase catalyzes the transcription of DNA into RNA using the four ribonucleoside triphosphates as substrates. The protein is DNA-directed RNA polymerase subunit alpha of Pectobacterium atrosepticum (strain SCRI 1043 / ATCC BAA-672) (Erwinia carotovora subsp. atroseptica).